Reading from the N-terminus, the 290-residue chain is Ribosomal RNA small subunit methyltransferase A (290 aa).

Residues asparagine 27, leucine 29, glycine 54, glutamate 75, aspartate 100, and asparagine 125 each coordinate S-adenosyl-L-methionine.

This sequence belongs to the class I-like SAM-binding methyltransferase superfamily. rRNA adenine N(6)-methyltransferase family. RsmA subfamily.

It localises to the cytoplasm. It carries out the reaction adenosine(1518)/adenosine(1519) in 16S rRNA + 4 S-adenosyl-L-methionine = N(6)-dimethyladenosine(1518)/N(6)-dimethyladenosine(1519) in 16S rRNA + 4 S-adenosyl-L-homocysteine + 4 H(+). Its function is as follows. Specifically dimethylates two adjacent adenosines (A1518 and A1519) in the loop of a conserved hairpin near the 3'-end of 16S rRNA in the 30S particle. May play a critical role in biogenesis of 30S subunits. The protein is Ribosomal RNA small subunit methyltransferase A of Streptococcus uberis (strain ATCC BAA-854 / 0140J).